The chain runs to 254 residues: Phosphomannomutase (254 aa).

Asp-16 (nucleophile) is an active-site residue. Mg(2+)-binding residues include Asp-16 and Asp-18. Asp-18 acts as the Proton donor/acceptor in catalysis. Arg-25, Arg-129, Arg-140, Arg-147, Ser-185, and Asp-187 together coordinate alpha-D-mannose 1-phosphate. Mg(2+) is bound by residues Asp-216, Tyr-228, Asp-230, and Thr-233.

This sequence belongs to the eukaryotic PMM family. Homodimer.

The protein localises to the cytoplasm. The catalysed reaction is alpha-D-mannose 1-phosphate = D-mannose 6-phosphate. The protein operates within nucleotide-sugar biosynthesis; GDP-alpha-D-mannose biosynthesis; alpha-D-mannose 1-phosphate from D-fructose 6-phosphate: step 2/2. Functionally, involved in the synthesis of the GDP-mannose and dolichol-phosphate-mannose required for a number of critical mannosyl transfer reactions. Required for maintaining N-linked glycoprotein glycosylation at the neuromuscular junction (NMJ) synaptomatrix, and thus acts in multiple pathways that prevent NMJ structural overgrowth, restrict synaptic bouton differentiation, and limit NMJ neurotransmission strength, in order to maintain viability, coordinate movement, and in adults ensure correct wing positioning. Acts in the NMJ trans-synaptic Wg pathway via glycosylation of synaptic Mmp2 which enables dlp/wg signaling during development. This is Phosphomannomutase from Drosophila melanogaster (Fruit fly).